Consider the following 178-residue polypeptide: Major non-capsid protein (178 aa).

It belongs to the tenuiviruses NCP family.

The protein localises to the host cytoplasm. In terms of biological role, induces the formation of large intracellular inclusion body, organized in amorphous and crystalline arrays. Presumably the main cause of the stripe disease observed in host. This Rice stripe virus (isolate T) (RSV) protein is Major non-capsid protein.